Consider the following 406-residue polypeptide: 8-amino-7-oxononanoate synthase (406 aa).

Substrate is bound at residue R20. G116–Y117 serves as a coordination point for pyridoxal 5'-phosphate. H141 is a binding site for substrate. Residues S187, H215, and T243 each contribute to the pyridoxal 5'-phosphate site. N6-(pyridoxal phosphate)lysine is present on K246. T366 lines the substrate pocket.

The protein belongs to the class-II pyridoxal-phosphate-dependent aminotransferase family. BioF subfamily. Homodimer. Pyridoxal 5'-phosphate serves as cofactor.

The catalysed reaction is 6-carboxyhexanoyl-[ACP] + L-alanine + H(+) = (8S)-8-amino-7-oxononanoate + holo-[ACP] + CO2. It participates in cofactor biosynthesis; biotin biosynthesis. Catalyzes the decarboxylative condensation of pimeloyl-[acyl-carrier protein] and L-alanine to produce 8-amino-7-oxononanoate (AON), [acyl-carrier protein], and carbon dioxide. The sequence is that of 8-amino-7-oxononanoate synthase from Cupriavidus metallidurans (strain ATCC 43123 / DSM 2839 / NBRC 102507 / CH34) (Ralstonia metallidurans).